The primary structure comprises 31 residues: Photosystem I reaction center subunit XII (31 aa).

Residues 7–26 (QIYIALLTALIPAFFALKLG) form a helical membrane-spanning segment.

The protein belongs to the PsaM family.

The protein localises to the plastid. Its subcellular location is the chloroplast thylakoid membrane. This is Photosystem I reaction center subunit XII from Euglena mutabilis.